The primary structure comprises 142 residues: Putative 2'-deoxynucleoside 5'-phosphate N-hydrolase 1 (142 aa).

Substrate-binding positions include 4 to 10 (FFSGSIR), Tyr19, His36, Glu82, and 106 to 108 (SAM).

This sequence belongs to the 2'-deoxynucleoside 5'-phosphate N-hydrolase 1 family. In terms of assembly, monomer and homodimer.

The catalysed reaction is a pyrimidine 2'-deoxyribonucleoside 5'-phosphate + H2O = a pyrimidine nucleobase + 2-deoxy-D-ribose 5-phosphate. The enzyme catalyses a purine 2'-deoxyribonucleoside 5'-phosphate + H2O = a purine nucleobase + 2-deoxy-D-ribose 5-phosphate. Catalyzes the cleavage of the N-glycosidic bond of deoxyribonucleoside 5'-monophosphates to yield deoxyribose 5-phosphate and a purine or pyrimidine base. This Syntrophotalea carbinolica (strain DSM 2380 / NBRC 103641 / GraBd1) (Pelobacter carbinolicus) protein is Putative 2'-deoxynucleoside 5'-phosphate N-hydrolase 1.